The chain runs to 187 residues: MATTNDIKNGTVLKLEGQLWNIIEFQHVKPGKGGAFVRTKMRNVMSGKVVDKTFNAGLKIETATVDRRDYQYLYQDGADFVFMDTSDYDQITVSGATVGDATNFMLENQMVNIAIHEGNPLYIELPPSVVLEITYTEPGLQGDRSSAGTKPATLETGYEIQVPLFVENNTKVKVDTRDGSYLGRVTE.

The protein belongs to the elongation factor P family.

It localises to the cytoplasm. It functions in the pathway protein biosynthesis; polypeptide chain elongation. Involved in peptide bond synthesis. Stimulates efficient translation and peptide-bond synthesis on native or reconstituted 70S ribosomes in vitro. Probably functions indirectly by altering the affinity of the ribosome for aminoacyl-tRNA, thus increasing their reactivity as acceptors for peptidyl transferase. The polypeptide is Elongation factor P (Pseudarthrobacter chlorophenolicus (strain ATCC 700700 / DSM 12829 / CIP 107037 / JCM 12360 / KCTC 9906 / NCIMB 13794 / A6) (Arthrobacter chlorophenolicus)).